Consider the following 251-residue polypeptide: Methionine aminopeptidase (251 aa).

Histidine 77 contributes to the substrate binding site. Aspartate 94, aspartate 105, and histidine 169 together coordinate a divalent metal cation. Histidine 176 contacts substrate. Residues glutamate 202 and glutamate 233 each coordinate a divalent metal cation.

This sequence belongs to the peptidase M24A family. Methionine aminopeptidase type 1 subfamily. In terms of assembly, monomer. Co(2+) is required as a cofactor. Zn(2+) serves as cofactor. The cofactor is Mn(2+). It depends on Fe(2+) as a cofactor.

It carries out the reaction Release of N-terminal amino acids, preferentially methionine, from peptides and arylamides.. Its function is as follows. Removes the N-terminal methionine from nascent proteins. The N-terminal methionine is often cleaved when the second residue in the primary sequence is small and uncharged (Met-Ala-, Cys, Gly, Pro, Ser, Thr, or Val). Requires deformylation of the N(alpha)-formylated initiator methionine before it can be hydrolyzed. The chain is Methionine aminopeptidase from Mycoplasma capricolum subsp. capricolum (strain California kid / ATCC 27343 / NCTC 10154).